Consider the following 171-residue polypeptide: Large ribosomal subunit protein uL10 (171 aa).

This sequence belongs to the universal ribosomal protein uL10 family. In terms of assembly, part of the ribosomal stalk of the 50S ribosomal subunit. The N-terminus interacts with L11 and the large rRNA to form the base of the stalk. The C-terminus forms an elongated spine to which L12 dimers bind in a sequential fashion forming a multimeric L10(L12)X complex.

Forms part of the ribosomal stalk, playing a central role in the interaction of the ribosome with GTP-bound translation factors. The chain is Large ribosomal subunit protein uL10 from Zymomonas mobilis subsp. mobilis (strain ATCC 31821 / ZM4 / CP4).